Here is a 283-residue protein sequence, read N- to C-terminus: Tetrahydroxynaphthalene reductase (283 aa).

Residues 1–21 (MPAVTQPRGESKYDAIPGPLG) form a disordered region. Position 39-63 (39-63 (RGIGREMAMELGRRGCKVIVNYANS)) interacts with NADP(+). Position 164 (S164) interacts with substrate. Residue Y178 is the Proton acceptor of the active site.

Belongs to the short-chain dehydrogenases/reductases (SDR) family. In terms of assembly, homotetramer.

The enzyme catalyses scytalone + NADP(+) = naphthalene-1,3,6,8-tetrol + NADPH + H(+). The protein operates within pigment biosynthesis; melanin biosynthesis. In terms of biological role, catalyzes the NADPH-dependent reduction of 1,3,6,8-tetrahydroxynaphthalene (T4HN) into (+)-scytalone and 1,3,8-trihydroxynaphthalene into (-)-vermelone. This enzyme is the biochemical target of several commercially important fungicides which are used to prevent blast disease in rice plants. This chain is Tetrahydroxynaphthalene reductase, found in Pyricularia oryzae (strain 70-15 / ATCC MYA-4617 / FGSC 8958) (Rice blast fungus).